Reading from the N-terminus, the 366-residue chain is 3-dehydroquinate synthase (366 aa).

Residues 107-111 (GVIGD), 131-132 (TS), K144, and K153 contribute to the NAD(+) site. 3 residues coordinate Zn(2+): E186, H251, and H268.

It belongs to the sugar phosphate cyclases superfamily. Dehydroquinate synthase family. Co(2+) is required as a cofactor. The cofactor is Zn(2+). It depends on NAD(+) as a cofactor.

It is found in the cytoplasm. The enzyme catalyses 7-phospho-2-dehydro-3-deoxy-D-arabino-heptonate = 3-dehydroquinate + phosphate. It functions in the pathway metabolic intermediate biosynthesis; chorismate biosynthesis; chorismate from D-erythrose 4-phosphate and phosphoenolpyruvate: step 2/7. In terms of biological role, catalyzes the conversion of 3-deoxy-D-arabino-heptulosonate 7-phosphate (DAHP) to dehydroquinate (DHQ). This is 3-dehydroquinate synthase from Rippkaea orientalis (strain PCC 8801 / RF-1) (Cyanothece sp. (strain PCC 8801)).